The following is a 240-amino-acid chain: Pyridoxine 5'-phosphate synthase (240 aa).

Asn6 contributes to the 3-amino-2-oxopropyl phosphate binding site. 8 to 9 (DH) is a 1-deoxy-D-xylulose 5-phosphate binding site. Arg17 is a binding site for 3-amino-2-oxopropyl phosphate. His42 functions as the Proton acceptor in the catalytic mechanism. 1-deoxy-D-xylulose 5-phosphate-binding residues include Arg44 and His49. Catalysis depends on Glu69, which acts as the Proton acceptor. Thr99 lines the 1-deoxy-D-xylulose 5-phosphate pocket. His190 (proton donor) is an active-site residue. 3-amino-2-oxopropyl phosphate-binding positions include Gly191 and 212 to 213 (GH).

It belongs to the PNP synthase family. As to quaternary structure, homooctamer; tetramer of dimers.

The protein localises to the cytoplasm. It carries out the reaction 3-amino-2-oxopropyl phosphate + 1-deoxy-D-xylulose 5-phosphate = pyridoxine 5'-phosphate + phosphate + 2 H2O + H(+). The protein operates within cofactor biosynthesis; pyridoxine 5'-phosphate biosynthesis; pyridoxine 5'-phosphate from D-erythrose 4-phosphate: step 5/5. Functionally, catalyzes the complicated ring closure reaction between the two acyclic compounds 1-deoxy-D-xylulose-5-phosphate (DXP) and 3-amino-2-oxopropyl phosphate (1-amino-acetone-3-phosphate or AAP) to form pyridoxine 5'-phosphate (PNP) and inorganic phosphate. The sequence is that of Pyridoxine 5'-phosphate synthase from Pseudomonas entomophila (strain L48).